A 281-amino-acid polypeptide reads, in one-letter code: Bifunctional protein FolD (281 aa).

Residue 163 to 165 (GRS) coordinates NADP(+).

Belongs to the tetrahydrofolate dehydrogenase/cyclohydrolase family. In terms of assembly, homodimer.

The enzyme catalyses (6R)-5,10-methylene-5,6,7,8-tetrahydrofolate + NADP(+) = (6R)-5,10-methenyltetrahydrofolate + NADPH. The catalysed reaction is (6R)-5,10-methenyltetrahydrofolate + H2O = (6R)-10-formyltetrahydrofolate + H(+). Its pathway is one-carbon metabolism; tetrahydrofolate interconversion. Its function is as follows. Catalyzes the oxidation of 5,10-methylenetetrahydrofolate to 5,10-methenyltetrahydrofolate and then the hydrolysis of 5,10-methenyltetrahydrofolate to 10-formyltetrahydrofolate. This Leuconostoc mesenteroides subsp. mesenteroides (strain ATCC 8293 / DSM 20343 / BCRC 11652 / CCM 1803 / JCM 6124 / NCDO 523 / NBRC 100496 / NCIMB 8023 / NCTC 12954 / NRRL B-1118 / 37Y) protein is Bifunctional protein FolD.